We begin with the raw amino-acid sequence, 173 residues long: Placenta-specific protein 1 (173 aa).

The signal sequence occupies residues 1-23 (MNLRKFLGGTVLVAFMLFSYSEQ).

The protein belongs to the PLAC1 family. Expressed in placenta.

The protein localises to the secreted. Functionally, may play a role in placental development. This chain is Placenta-specific protein 1, found in Mus musculus (Mouse).